Reading from the N-terminus, the 339-residue chain is tRNA N6-adenosine threonylcarbamoyltransferase (339 aa).

Fe cation contacts are provided by H111 and H115. Substrate contacts are provided by residues 134-138, D167, G180, and N272; that span reads LVSGG. D300 is a binding site for Fe cation.

It belongs to the KAE1 / TsaD family. Requires Fe(2+) as cofactor.

Its subcellular location is the cytoplasm. It carries out the reaction L-threonylcarbamoyladenylate + adenosine(37) in tRNA = N(6)-L-threonylcarbamoyladenosine(37) in tRNA + AMP + H(+). Required for the formation of a threonylcarbamoyl group on adenosine at position 37 (t(6)A37) in tRNAs that read codons beginning with adenine. Is involved in the transfer of the threonylcarbamoyl moiety of threonylcarbamoyl-AMP (TC-AMP) to the N6 group of A37, together with TsaE and TsaB. TsaD likely plays a direct catalytic role in this reaction. This is tRNA N6-adenosine threonylcarbamoyltransferase from Vibrio cholerae serotype O1 (strain ATCC 39541 / Classical Ogawa 395 / O395).